The primary structure comprises 156 residues: Transcriptional regulator MraZ (156 aa).

SpoVT-AbrB domains follow at residues 7–64 (KERH…EPSV) and 93–136 (LEMV…EPAR).

This sequence belongs to the MraZ family. As to quaternary structure, forms oligomers.

The protein resides in the cytoplasm. It is found in the nucleoid. The chain is Transcriptional regulator MraZ from Chlorobium phaeovibrioides (strain DSM 265 / 1930) (Prosthecochloris vibrioformis (strain DSM 265)).